The chain runs to 113 residues: Retrotransposon Gag-like protein 8B (113 aa).

Belongs to the FAM127 family.

This Homo sapiens (Human) protein is Retrotransposon Gag-like protein 8B (RTL8B).